The following is a 218-amino-acid chain: Small ribosomal subunit protein uS3 (218 aa).

The 69-residue stretch at 38–106 (IRKFIATKLA…RVHINIVEIK (69 aa)) folds into the KH type-2 domain.

Belongs to the universal ribosomal protein uS3 family. In terms of assembly, part of the 30S ribosomal subunit. Forms a tight complex with proteins S10 and S14.

Its function is as follows. Binds the lower part of the 30S subunit head. Binds mRNA in the 70S ribosome, positioning it for translation. The sequence is that of Small ribosomal subunit protein uS3 from Enterococcus faecalis (strain ATCC 700802 / V583).